Reading from the N-terminus, the 427-residue chain is Imidazolonepropionase (427 aa).

Residues H78 and H80 each coordinate Fe(3+). Zn(2+) contacts are provided by H78 and H80. 4-imidazolone-5-propanoate is bound by residues R87, Y150, and H183. Residue Y150 participates in N-formimidoyl-L-glutamate binding. Fe(3+) is bound at residue H255. Residue H255 coordinates Zn(2+). Residue E258 participates in 4-imidazolone-5-propanoate binding. D330 contacts Fe(3+). Position 330 (D330) interacts with Zn(2+). 2 residues coordinate N-formimidoyl-L-glutamate: N332 and G334. Position 335 (T335) interacts with 4-imidazolone-5-propanoate.

This sequence belongs to the metallo-dependent hydrolases superfamily. HutI family. Requires Zn(2+) as cofactor. The cofactor is Fe(3+).

It localises to the cytoplasm. The catalysed reaction is 4-imidazolone-5-propanoate + H2O = N-formimidoyl-L-glutamate. Its pathway is amino-acid degradation; L-histidine degradation into L-glutamate; N-formimidoyl-L-glutamate from L-histidine: step 3/3. Catalyzes the hydrolytic cleavage of the carbon-nitrogen bond in imidazolone-5-propanoate to yield N-formimidoyl-L-glutamate. It is the third step in the universal histidine degradation pathway. This Herpetosiphon aurantiacus (strain ATCC 23779 / DSM 785 / 114-95) protein is Imidazolonepropionase.